The chain runs to 623 residues: uncharacterized protein (623 aa).

5 helical membrane-spanning segments follow: residues 242 to 262 (IVLALTILALLLGLRKLITWL), 288 to 308 (IVSPVSVFLALFSCDVALDIF), 318 to 338 (VSMWVGAVYIMLLAWLVIALF), 361 to 381 (VINLILKVVYFLIFIVALLGV), and 387 to 407 (FNVSAIIASLGIGGLAVALAV).

This sequence belongs to the MscS (TC 1.A.23) family.

The protein resides in the cell membrane. This is an uncharacterized protein from Helicobacter pylori (strain ATCC 700392 / 26695) (Campylobacter pylori).